We begin with the raw amino-acid sequence, 82 residues long: uncharacterized protein (82 aa).

The segment covering 55–64 (DQNTAPSTPS) has biased composition (polar residues). Positions 55-82 (DQNTAPSTPSKILPKRLPSQSNLNNNNN) are disordered.

This is an uncharacterized protein from Dictyostelium discoideum (Social amoeba).